The following is a 450-amino-acid chain: Bifunctional apoptosis regulator (450 aa).

The tract at residues 1-20 (MEEPQKSYVNTMDLERDEPL) is disordered. The Cytoplasmic portion of the chain corresponds to 1-140 (MEEPQKSYVN…PNTGRANQQM (140 aa)). The RING-type zinc finger occupies 34–74 (CHCCYDILVNPTTLNCGHSFCRHCLALWWASSKKTECPECR). The helical transmembrane segment at 141–161 (GGGFFSGVLTALTGVAVVLLV) threads the bilayer. The Lumenal portion of the chain corresponds to 162–331 (YHWSSRESEH…KEPTWKQWRE (170 aa)). Residues 182–249 (WTAEEVVLWL…LMELERVKAL (68 aa)) form the SAM domain. The N-linked (GlcNAc...) asparagine glycan is linked to N232. A helical membrane pass occupies residues 332 to 352 (FLVKYSFLPYQLIAEFAWDWL). The Cytoplasmic segment spans residues 353–360 (EVHYWTSR). The helical transmembrane segment at 361–381 (FLIINAMLLSVLELFSFWRIW) threads the bilayer. At 382–404 (SRSELKTVPQRMWSHFWKVSTQG) the chain is on the lumenal side. A helical transmembrane segment spans residues 405–425 (LFVAMFWPLIPQFVCNCLFYW). The Cytoplasmic portion of the chain corresponds to 426–450 (ALYFNPIINIDLVVKELRRLETQVL).

In terms of assembly, interacts with CASP8, BCL2 and BCL2L1 through SAM domain and also with HIP1, IFT57, ESRRBL1 and BCAP31. Interacts with NGFR; this interaction inhibits NF-kappa-B and JNK-related signaling pathways. Post-translationally, mediates RING-dependent self-ubiquitination leading to proteasomal degradation. Expressed highly in brain, moderately in small intestine, weakly in testes and only faintly in liver and skeletal muscle. Not expressed in heart, kidney, lung and spleen.

The protein localises to the endoplasmic reticulum membrane. It carries out the reaction S-ubiquitinyl-[E2 ubiquitin-conjugating enzyme]-L-cysteine + [acceptor protein]-L-lysine = [E2 ubiquitin-conjugating enzyme]-L-cysteine + N(6)-ubiquitinyl-[acceptor protein]-L-lysine.. Its function is as follows. Membrane-bound E3 ubiquitin ligase that plays a role in several processes including apoptosis regulation or reticulum endoplasmic stress. Has anti-apoptotic activity, both for apoptosis triggered via death-receptors and via mitochondrial factors. Contributes to the dynamic control of IRE1/ERN1 signaling during ER stress by inducing BAX inhibitor 1/TMBIM6 proteasomal degradation. Promotes the activation of TGF-beta signaling by mediating the 'Lys-63'-linked ubiquitination of TGFBR1 which is critical to activate the pathway. Together with NGFR, negatively regulates NF-kappa-B and JNK-related signaling pathways. Promotes the proteasome-mediated degradation of PNPLA3, a protein involveld in lipid metabolism. This chain is Bifunctional apoptosis regulator (BFAR), found in Homo sapiens (Human).